A 595-amino-acid polypeptide reads, in one-letter code: Outer dynein arm-docking complex subunit 3 (595 aa).

Residues 1–69 are disordered; it reads MTSPLCRAAS…RGAGKPSVHS (69 aa). Coiled coils occupy residues 94-327 and 385-473; these read WNIK…REHL and FAQL…ASKL.

In terms of assembly, component of the outer dynein arm-docking complex along with ODAD1, ODAD2, ODAD4 and CLXN. Interacts with ODAD1. Interacts with PIERCE1 and PIERCE2; the interactions link the outer dynein arms docking complex (ODA-DC) to the internal microtubule inner proteins (MIP) in cilium axoneme.

It is found in the cytoplasm. The protein localises to the cytoskeleton. The protein resides in the cilium basal body. It localises to the microtubule organizing center. Its subcellular location is the centrosome. It is found in the centriole. The protein localises to the cilium axoneme. Functionally, component of the outer dynein arm-docking complex (ODA-DC) that mediates outer dynein arms (ODA) binding onto the doublet microtubule. Involved in mediating assembly of both ODAs and their axonemal docking complex onto ciliary microtubules. This Homo sapiens (Human) protein is Outer dynein arm-docking complex subunit 3.